We begin with the raw amino-acid sequence, 180 residues long: Large ribosomal subunit protein uL5 (180 aa).

Belongs to the universal ribosomal protein uL5 family. In terms of assembly, part of the 50S ribosomal subunit; part of the 5S rRNA/L5/L18/L25 subcomplex. Contacts the 5S rRNA and the P site tRNA. Forms a bridge to the 30S subunit in the 70S ribosome.

Functionally, this is one of the proteins that bind and probably mediate the attachment of the 5S RNA into the large ribosomal subunit, where it forms part of the central protuberance. In the 70S ribosome it contacts protein S13 of the 30S subunit (bridge B1b), connecting the 2 subunits; this bridge is implicated in subunit movement. Contacts the P site tRNA; the 5S rRNA and some of its associated proteins might help stabilize positioning of ribosome-bound tRNAs. In Anaeromyxobacter dehalogenans (strain 2CP-1 / ATCC BAA-258), this protein is Large ribosomal subunit protein uL5.